Here is a 399-residue protein sequence, read N- to C-terminus: PCI domain-containing protein 2 (399 aa).

Residues 210-391 (VTFKYYVGRK…QKLVVSKQNP (182 aa)) enclose the PCI domain.

This sequence belongs to the CSN12 family.

The sequence is that of PCI domain-containing protein 2 (pcid2) from Xenopus laevis (African clawed frog).